A 247-amino-acid chain; its full sequence is MNGRADFREPNAQVSRPIPDIGGGYIPTEEEWRLFAECHEECFWFRSVPLAATSMLITQGLISKGILSSHPKYGSIPKLIFACIVGYFAGKLSYVKTCQEKFKKLENSPLGEALRSGELRRSLPPGHYTQKPKYDSNVSGQSSFGTSPAADNIEKETLPRYEPIPFSASMNESTPTGITDHIAQGPDPNLEDSPKRKSVTYEELRNKNRESYGVTLSHKTDPSVRPMQERGPQKEVKVNKYGDTWDE.

Positions 1 to 112 constitute an OCIA domain; that stretch reads MNGRADFREP…KKLENSPLGE (112 aa). 2 positions are modified to phosphoserine: S108 and S116. Positions 116-247 are disordered; that stretch reads SGELRRSLPP…VNKYGDTWDE (132 aa). Polar residues-rich tracts occupy residues 136–146 and 168–177; these read SNVSGQSSFGT and ASMNESTPTG. 2 stretches are compositionally biased toward basic and acidic residues: residues 192–210 and 218–240; these read DSPKRKSVTYEELRNKNRE and HKTDPSVRPMQERGPQKEVKVNK. Phosphoserine occurs at positions 193 and 198.

It belongs to the OCIAD1 family. Interacts with OCIAD2. Interacts with STAT3.

It is found in the endosome. Functionally, maintains stem cell potency. Increases STAT3 phosphorylation and controls ERK phosphorylation. May act as a scaffold, increasing STAT3 recruitment onto endosomes. This chain is OCIA domain-containing protein 1, found in Rattus norvegicus (Rat).